We begin with the raw amino-acid sequence, 509 residues long: Hyaluronidase PH-20 (509 aa).

An N-terminal signal peptide occupies residues 1–35; that stretch reads MGVLKFKHIFFRSFVKSSGVSQIVFTFLLIPCCLT. Intrachain disulfides connect Cys60-Cys351 and Cys224-Cys238. A glycan (N-linked (GlcNAc...) asparagine) is linked at Asn82. The active-site Proton donor is the Glu148. Residues Asn166, Asn235, Asn254, and Asn368 are each glycosylated (N-linked (GlcNAc...) asparagine). 3 disulfides stabilise this stretch: Cys376–Cys387, Cys381–Cys435, and Cys437–Cys464. Asn393 carries N-linked (GlcNAc...) asparagine glycosylation. Ser490 carries GPI-anchor amidated serine lipidation. Positions 491–509 are cleaved as a propeptide — removed in mature form; sequence ATMFIVSILFLIISSVASL.

This sequence belongs to the glycosyl hydrolase 56 family. In terms of processing, N-glycosylated. Testis.

Its subcellular location is the cell membrane. The catalysed reaction is Random hydrolysis of (1-&gt;4)-linkages between N-acetyl-beta-D-glucosamine and D-glucuronate residues in hyaluronate.. Involved in sperm-egg adhesion. Upon fertilization sperm must first penetrate a layer of cumulus cells that surrounds the egg before reaching the zona pellucida. The cumulus cells are embedded in a matrix containing hyaluronic acid which is formed prior to ovulation. This protein aids in penetrating the layer of cumulus cells by digesting hyaluronic acid. The protein is Hyaluronidase PH-20 (SPAM1) of Homo sapiens (Human).